A 187-amino-acid polypeptide reads, in one-letter code: Elongation factor P (187 aa).

This sequence belongs to the elongation factor P family.

The protein resides in the cytoplasm. It functions in the pathway protein biosynthesis; polypeptide chain elongation. Its function is as follows. Involved in peptide bond synthesis. Stimulates efficient translation and peptide-bond synthesis on native or reconstituted 70S ribosomes in vitro. Probably functions indirectly by altering the affinity of the ribosome for aminoacyl-tRNA, thus increasing their reactivity as acceptors for peptidyl transferase. In Rhodococcus opacus (strain B4), this protein is Elongation factor P.